Reading from the N-terminus, the 43-residue chain is Disintegrin CV (43 aa).

Cystine bridges form between Cys-1-Cys-10, Cys-6-Cys-29, Cys-7-Cys-34, and Cys-19-Cys-36. Positions 1 to 43 (CTTGPCCRQCKLKPAGTTCWRTSVSSHYCTGRSCECPSYPGNG) constitute a Disintegrin domain. The Cell attachment site; atypical (RTS) motif lies at 21–23 (RTS).

Belongs to the disintegrin family. Short disintegrin subfamily. Monomer. In terms of tissue distribution, expressed by the venom gland.

It localises to the secreted. In terms of biological role, specifically interacts with the alpha-1/beta-1 integrin (ITGA1/ITGB1). Exhibits highly inhibitory effects on cell adhesion and cell migration to collagens I and IV. Also shows in vivo anti-angiogenic activity. The polypeptide is Disintegrin CV (Cerastes vipera (Sahara sand viper)).